The sequence spans 72 residues: MKEGIHPKYNEIIVKCLCGNSFESRSTKAEISTEVCSQCHPFYTGKQKLMDTAGRVERFRKRYNIAAAPEES.

Zn(2+)-binding residues include C16, C18, C36, and C39.

Belongs to the bacterial ribosomal protein bL31 family. Type A subfamily. Part of the 50S ribosomal subunit. The cofactor is Zn(2+).

Binds the 23S rRNA. This chain is Large ribosomal subunit protein bL31, found in Geobacter sp. (strain M21).